We begin with the raw amino-acid sequence, 161 residues long: MTADTPTTADIDLIQRILPHRYPFLLVDRVRDIEPFKSAVGLKNVTVNEPHFQGHFPGVPIMPGVTIVEAMAQTAAVMVGVSADLADKNFLVYFMGIDSCKFRRKVGPGDVLELHVTATRGKPGAKVWKFDGRAEVDGELACECSFTAMMDLPTSPPGEAG.

Residue histidine 55 is part of the active site.

The protein belongs to the thioester dehydratase family. FabZ subfamily.

It localises to the cytoplasm. It catalyses the reaction a (3R)-hydroxyacyl-[ACP] = a (2E)-enoyl-[ACP] + H2O. Involved in unsaturated fatty acids biosynthesis. Catalyzes the dehydration of short chain beta-hydroxyacyl-ACPs and long chain saturated and unsaturated beta-hydroxyacyl-ACPs. The chain is 3-hydroxyacyl-[acyl-carrier-protein] dehydratase FabZ from Jannaschia sp. (strain CCS1).